The primary structure comprises 383 residues: Protein FAM217B (383 aa).

Disordered regions lie at residues 1–70 (MNAG…CQGA), 89–115 (ADEDSASDLSDSERIPIPPSPLTPPDL), 200–222 (KAKGGKARPPTAPGTSGALKSPG), 232–251 (SKPLPHQEGASKSGPSRKKA), 284–325 (QTLE…HIRV), and 338–383 (SCKA…YKLK). Residues 8–43 (NKVQHSKNSSGKRQSKSQVPHASSQPRSSLTAVTQP) are compositionally biased toward polar residues. Residues 44–56 (TEEKLKESISPEA) are compositionally biased toward basic and acidic residues. Residues 374–383 (GVKQNTYKLK) show a composition bias toward polar residues.

It belongs to the FAM217 family.

The chain is Protein FAM217B (FAM217B) from Homo sapiens (Human).